Here is a 188-residue protein sequence, read N- to C-terminus: CXXC-type zinc finger protein 4 (188 aa).

The segment at 1-20 is disordered; sequence MHRNDSQRLGKPGGAPESLQ. The CXXC-type zinc-finger motif lies at 122–163; the sequence is AKKKRKRCGVCVPCKRLINCGVCSSCRNRKTGHQICKFRKCE. Cysteine 129, cysteine 132, cysteine 135, cysteine 141, cysteine 144, cysteine 147, cysteine 157, and cysteine 162 together coordinate Zn(2+).

It is found in the cytoplasm. Acts as a negative regulator of the Wnt signaling pathway required for anterior neural structure formation. Binds preferentially to DNA containing cytidine-phosphate-guanosine (CpG) dinucleotides over CpH (H=A, T, and C), hemimethylated-CpG and hemimethylated-hydroxymethyl-CpG. The protein is CXXC-type zinc finger protein 4 (cxxc4) of Xenopus tropicalis (Western clawed frog).